A 228-amino-acid polypeptide reads, in one-letter code: 7-cyano-7-deazaguanine synthase (228 aa).

9–19 (LSGGPDSTTVL) provides a ligand contact to ATP. Zn(2+) contacts are provided by Cys193, Cys203, Cys206, and Cys209.

Belongs to the QueC family. It depends on Zn(2+) as a cofactor.

The enzyme catalyses 7-carboxy-7-deazaguanine + NH4(+) + ATP = 7-cyano-7-deazaguanine + ADP + phosphate + H2O + H(+). Its pathway is purine metabolism; 7-cyano-7-deazaguanine biosynthesis. Functionally, catalyzes the ATP-dependent conversion of 7-carboxy-7-deazaguanine (CDG) to 7-cyano-7-deazaguanine (preQ(0)). The sequence is that of 7-cyano-7-deazaguanine synthase from Rickettsia rickettsii (strain Iowa).